A 460-amino-acid chain; its full sequence is MSTKEQVFFKQATSKNKIHFISLGCSRNLVDSEVMLGILLKAGYEATETLEEADYLILNTCAFLKAARDESKDYLQRIIKAKKESAKIILTGCMVSKHKEELKPWLPYIHYVLGSGDVEHILSAIESKEAGEKLTSKSYLEMGEIPRKLSTPKHYAYLKIAEGCRKRCAFCIIPTIKGGLRSKSLDQIIKEFRLLLKMGVKEIILIAQDLGDYGKDLSADRKSCLDSVLKEMLKEPGDYWIRMLYLYPDEVDDTIIDLMESDPRLLPYVDIPLQHINNRVLKSMLRTTSKEQILDLLTKLRTRIPHIYIRSSFIVGFPGETDEEFQDLVDFVSEGWIDNLGIFSYSQEEGSVAANMADQISQSVKSKRLKILSQTQKKNVEKHNKQLVGQIVEAVIDGYHPDSELLLTARFYGQAPEVDPCIIVNEARLVSGFGERYLIEITGYVGYDLVGRVIKKVPGE.

Positions 16 to 130 constitute an MTTase N-terminal domain; the sequence is NKIHFISLGC…ILSAIESKEA (115 aa). Positions 25, 61, 93, 164, 168, and 171 each coordinate [4Fe-4S] cluster. Positions 150–382 constitute a Radical SAM core domain; it reads STPKHYAYLK…SQTQKKNVEK (233 aa). A TRAM domain is found at 385–455; the sequence is KQLVGQIVEA…GYDLVGRVIK (71 aa).

Belongs to the methylthiotransferase family. RimO subfamily. [4Fe-4S] cluster serves as cofactor.

Its subcellular location is the cytoplasm. It carries out the reaction L-aspartate(89)-[ribosomal protein uS12]-hydrogen + (sulfur carrier)-SH + AH2 + 2 S-adenosyl-L-methionine = 3-methylsulfanyl-L-aspartate(89)-[ribosomal protein uS12]-hydrogen + (sulfur carrier)-H + 5'-deoxyadenosine + L-methionine + A + S-adenosyl-L-homocysteine + 2 H(+). In terms of biological role, catalyzes the methylthiolation of an aspartic acid residue of ribosomal protein uS12. This is Ribosomal protein uS12 methylthiotransferase RimO from Chlamydia caviae (strain ATCC VR-813 / DSM 19441 / 03DC25 / GPIC) (Chlamydophila caviae).